A 133-amino-acid polypeptide reads, in one-letter code: Putative nickel-responsive regulator (133 aa).

Ni(2+) contacts are provided by histidine 74, histidine 85, histidine 87, and cysteine 93.

The protein belongs to the transcriptional regulatory CopG/NikR family. It depends on Ni(2+) as a cofactor.

Functionally, transcriptional regulator. This is Putative nickel-responsive regulator from Saccharolobus islandicus (strain Y.N.15.51 / Yellowstone #2) (Sulfolobus islandicus).